The sequence spans 754 residues: Gelsolin, cytoplasmic (754 aa).

Residues 1–120 are actin-severing; it reads MVPAFEGAGA…RYLKGGVASG (120 aa). One copy of the Gelsolin-like 1 repeat lies at 22-71; the sequence is FEVVPYPKEKYGQFYQGDSYIVLYTRDVNGNLSWDLHFWLGSETSQDEAG. The actin-actin interfilament contact point stretch occupies residues 68 to 71; it reads DEAG. A 1,2-diacyl-sn-glycero-3-phospho-(1D-myo-inositol-4,5-bisphosphate) contacts are provided by residues 101-108 and 133-141; these read LFLSRFKK and RLFHVKGRR. One copy of the Gelsolin-like 2 repeat lies at 143–183; it reads IRIRQVEVGVGSMNKGDCFILDCGSQVYAYMGPSSRKMDRL. The interval 209–238 is disordered; that stretch reads TASGSEAGESSPGLGGGSPDDVADEDTGVD. The span at 210–220 shows a compositional bias: low complexity; that stretch reads ASGSEAGESSP. 4 Gelsolin-like repeats span residues 266-306, 414-463, 538-580, and 643-684; these read NMIG…KEKV, LKLE…DEKA, FDTR…EEKA, and LRVN…QEKE. Residues 386-751 are actin-binding, Ca-sensitive; that stretch reads LLQKNAGPAF…MKAQVPETNA (366 aa). 8 residues coordinate Ca(2+): Gly430, Asp431, Glu461, Asp556, Glu578, Asp659, Asp660, and Glu682.

This sequence belongs to the villin/gelsolin family. Tail muscle.

The protein localises to the cytoplasm. Its subcellular location is the cytoskeleton. Functionally, calcium-regulated, actin-modulating protein that binds to the plus (or barbed) ends of actin monomers or filaments, preventing monomer exchange (end-blocking or capping). It can promote the assembly of monomers into filaments (nucleation) as well as sever filaments already formed. The polypeptide is Gelsolin, cytoplasmic (Homarus americanus (American lobster)).